A 347-amino-acid polypeptide reads, in one-letter code: Anthranilate phosphoribosyltransferase (347 aa).

Residues Gly82, 85-86 (GD), Thr90, 92-95 (NIST), 110-118 (KHGNRAITS), and Thr122 contribute to the 5-phospho-alpha-D-ribose 1-diphosphate site. Gly82 contacts anthranilate. A Mg(2+)-binding site is contributed by Ser94. Asn113 contributes to the anthranilate binding site. Arg168 contributes to the anthranilate binding site. Mg(2+) is bound by residues Asp226 and Glu227.

Belongs to the anthranilate phosphoribosyltransferase family. As to quaternary structure, homodimer. It depends on Mg(2+) as a cofactor.

It carries out the reaction N-(5-phospho-beta-D-ribosyl)anthranilate + diphosphate = 5-phospho-alpha-D-ribose 1-diphosphate + anthranilate. The protein operates within amino-acid biosynthesis; L-tryptophan biosynthesis; L-tryptophan from chorismate: step 2/5. Functionally, catalyzes the transfer of the phosphoribosyl group of 5-phosphorylribose-1-pyrophosphate (PRPP) to anthranilate to yield N-(5'-phosphoribosyl)-anthranilate (PRA). The protein is Anthranilate phosphoribosyltransferase of Caulobacter sp. (strain K31).